The primary structure comprises 459 residues: tRNA modification GTPase MnmE (459 aa).

The (6S)-5-formyl-5,6,7,8-tetrahydrofolate site is built by Arg-22, Glu-85, and Arg-124. Residues 221–380 (GLSTVIVGRP…LEIQIKDLFF (160 aa)) form the TrmE-type G domain. Residue Asn-231 coordinates K(+). Residues 231 to 236 (NVGKSS), 250 to 256 (TEVAGTT), and 275 to 278 (DTAG) contribute to the GTP site. Ser-235 provides a ligand contact to Mg(2+). Residues Thr-250, Val-252, and Thr-255 each contribute to the K(+) site. Position 256 (Thr-256) interacts with Mg(2+). Lys-459 contacts (6S)-5-formyl-5,6,7,8-tetrahydrofolate.

It belongs to the TRAFAC class TrmE-Era-EngA-EngB-Septin-like GTPase superfamily. TrmE GTPase family. Homodimer. Heterotetramer of two MnmE and two MnmG subunits. K(+) is required as a cofactor.

It is found in the cytoplasm. Functionally, exhibits a very high intrinsic GTPase hydrolysis rate. Involved in the addition of a carboxymethylaminomethyl (cmnm) group at the wobble position (U34) of certain tRNAs, forming tRNA-cmnm(5)s(2)U34. In Staphylococcus epidermidis (strain ATCC 35984 / DSM 28319 / BCRC 17069 / CCUG 31568 / BM 3577 / RP62A), this protein is tRNA modification GTPase MnmE.